A 1068-amino-acid chain; its full sequence is Carbamoyl phosphate synthase large chain (1068 aa).

The segment at 1–401 (MPLNKDIKKV…AFLKGTRSLE (401 aa)) is carboxyphosphate synthetic domain. R129, R169, G175, G176, K208, V210, E215, G241, I242, H243, Q284, and E298 together coordinate ATP. The 195-residue stretch at 133–327 (RNVMSRINGP…IAKVASKIAL (195 aa)) folds into the ATP-grasp 1 domain. The Mg(2+) site is built by Q284, E298, and N300. Residues Q284, E298, and N300 each contribute to the Mn(2+) site. The tract at residues 402 to 549 (IGKYSLEHKK…YSTYDVYDEV (148 aa)) is oligomerization domain. Positions 550-932 (EVSKNKKVIV…ALYKGFIGAN (383 aa)) are carbamoyl phosphate synthetic domain. One can recognise an ATP-grasp 2 domain in the interval 674–864 (DELLEKLKIA…IVDIATRVML (191 aa)). ATP is bound by residues R710, K749, L751, E755, G780, V781, H782, S783, Q823, and E835. The Mg(2+) site is built by Q823, E835, and N837. Mn(2+)-binding residues include Q823, E835, and N837. Residues 933-1068 (MSIKKEKGTV…ETLYIFDLSN (136 aa)) form the MGS-like domain. An allosteric domain region spans residues 933–1068 (MSIKKEKGTV…ETLYIFDLSN (136 aa)).

This sequence belongs to the CarB family. As to quaternary structure, composed of two chains; the small (or glutamine) chain promotes the hydrolysis of glutamine to ammonia, which is used by the large (or ammonia) chain to synthesize carbamoyl phosphate. Tetramer of heterodimers (alpha,beta)4. Requires Mg(2+) as cofactor. It depends on Mn(2+) as a cofactor.

The enzyme catalyses hydrogencarbonate + L-glutamine + 2 ATP + H2O = carbamoyl phosphate + L-glutamate + 2 ADP + phosphate + 2 H(+). The catalysed reaction is hydrogencarbonate + NH4(+) + 2 ATP = carbamoyl phosphate + 2 ADP + phosphate + 2 H(+). It participates in amino-acid biosynthesis; L-arginine biosynthesis; carbamoyl phosphate from bicarbonate: step 1/1. The protein operates within pyrimidine metabolism; UMP biosynthesis via de novo pathway; (S)-dihydroorotate from bicarbonate: step 1/3. In terms of biological role, large subunit of the glutamine-dependent carbamoyl phosphate synthetase (CPSase). CPSase catalyzes the formation of carbamoyl phosphate from the ammonia moiety of glutamine, carbonate, and phosphate donated by ATP, constituting the first step of 2 biosynthetic pathways, one leading to arginine and/or urea and the other to pyrimidine nucleotides. The large subunit (synthetase) binds the substrates ammonia (free or transferred from glutamine from the small subunit), hydrogencarbonate and ATP and carries out an ATP-coupled ligase reaction, activating hydrogencarbonate by forming carboxy phosphate which reacts with ammonia to form carbamoyl phosphate. This chain is Carbamoyl phosphate synthase large chain, found in Clostridium botulinum (strain Kyoto / Type A2).